Consider the following 659-residue polypeptide: L-type lectin-domain containing receptor kinase V.7 (659 aa).

A signal peptide spans 1 to 25 (MSHKVLQIVLVLLLTLFSSTHNSNG). Positions 22–244 (NSNGNFLMEE…GALYYVMQFS (223 aa)) are legume-lectin like. Topologically, residues 26-275 (NFLMEEAAAA…PKKSYDRTRR (250 aa)) are extracellular. N-linked (GlcNAc...) asparagine glycans are attached at residues asparagine 45, asparagine 64, asparagine 110, and asparagine 192. A helical membrane pass occupies residues 276–296 (ILAVCLTLAVFTALVASGIGF). At 297–659 (VFYVRHKKVK…LTNSFVSHGR (363 aa)) the chain is on the cytoplasmic side. In terms of domain architecture, Protein kinase spans 333–595 (FKEKQLLGKG…GLLCAHHTEL (263 aa)). Residues 339-347 (LGKGGFGQV) and lysine 362 contribute to the ATP site. The active-site Proton acceptor is aspartate 462.

This sequence in the C-terminal section; belongs to the protein kinase superfamily. Ser/Thr protein kinase family. In the N-terminal section; belongs to the leguminous lectin family.

It is found in the cell membrane. The catalysed reaction is L-seryl-[protein] + ATP = O-phospho-L-seryl-[protein] + ADP + H(+). It catalyses the reaction L-threonyl-[protein] + ATP = O-phospho-L-threonyl-[protein] + ADP + H(+). Involved in resistance response to the pathogenic oomycetes Phytophthora infestans and Phytophthora capsici and to the pathogenic bacteria Pseudomonas syringae. The chain is L-type lectin-domain containing receptor kinase V.7 from Arabidopsis thaliana (Mouse-ear cress).